The primary structure comprises 254 residues: Phosphoribosylaminoimidazole-succinocarboxamide synthase (254 aa).

Belongs to the SAICAR synthetase family.

It carries out the reaction 5-amino-1-(5-phospho-D-ribosyl)imidazole-4-carboxylate + L-aspartate + ATP = (2S)-2-[5-amino-1-(5-phospho-beta-D-ribosyl)imidazole-4-carboxamido]succinate + ADP + phosphate + 2 H(+). Its pathway is purine metabolism; IMP biosynthesis via de novo pathway; 5-amino-1-(5-phospho-D-ribosyl)imidazole-4-carboxamide from 5-amino-1-(5-phospho-D-ribosyl)imidazole-4-carboxylate: step 1/2. This is Phosphoribosylaminoimidazole-succinocarboxamide synthase from Rhodospirillum centenum (strain ATCC 51521 / SW).